The following is a 347-amino-acid chain: UDP-3-O-acylglucosamine N-acyltransferase 1 (347 aa).

Histidine 246 acts as the Proton acceptor in catalysis.

This sequence belongs to the transferase hexapeptide repeat family. LpxD subfamily. In terms of assembly, homotrimer.

It carries out the reaction a UDP-3-O-[(3R)-3-hydroxyacyl]-alpha-D-glucosamine + a (3R)-hydroxyacyl-[ACP] = a UDP-2-N,3-O-bis[(3R)-3-hydroxyacyl]-alpha-D-glucosamine + holo-[ACP] + H(+). It functions in the pathway bacterial outer membrane biogenesis; LPS lipid A biosynthesis. In terms of biological role, catalyzes the N-acylation of UDP-3-O-acylglucosamine using 3-hydroxyacyl-ACP as the acyl donor. Is involved in the biosynthesis of lipid A, a phosphorylated glycolipid that anchors the lipopolysaccharide to the outer membrane of the cell. The chain is UDP-3-O-acylglucosamine N-acyltransferase 1 from Francisella tularensis subsp. tularensis (strain SCHU S4 / Schu 4).